The primary structure comprises 217 residues: ATP phosphoribosyltransferase (217 aa).

This sequence belongs to the ATP phosphoribosyltransferase family. Short subfamily. Heteromultimer composed of HisG and HisZ subunits.

The protein resides in the cytoplasm. It carries out the reaction 1-(5-phospho-beta-D-ribosyl)-ATP + diphosphate = 5-phospho-alpha-D-ribose 1-diphosphate + ATP. It participates in amino-acid biosynthesis; L-histidine biosynthesis; L-histidine from 5-phospho-alpha-D-ribose 1-diphosphate: step 1/9. In terms of biological role, catalyzes the condensation of ATP and 5-phosphoribose 1-diphosphate to form N'-(5'-phosphoribosyl)-ATP (PR-ATP). Has a crucial role in the pathway because the rate of histidine biosynthesis seems to be controlled primarily by regulation of HisG enzymatic activity. This is ATP phosphoribosyltransferase from Prochlorococcus marinus (strain MIT 9313).